The following is a 228-amino-acid chain: Urease accessory protein UreF (228 aa).

This sequence belongs to the UreF family. As to quaternary structure, ureD, UreF and UreG form a complex that acts as a GTP-hydrolysis-dependent molecular chaperone, activating the urease apoprotein by helping to assemble the nickel containing metallocenter of UreC. The UreE protein probably delivers the nickel.

It is found in the cytoplasm. Required for maturation of urease via the functional incorporation of the urease nickel metallocenter. The protein is Urease accessory protein UreF of Prochlorococcus marinus subsp. pastoris (strain CCMP1986 / NIES-2087 / MED4).